Here is a 309-residue protein sequence, read N- to C-terminus: Olfactory receptor 10J5 (309 aa).

Residues 1–25 (MKRKNFTEVSEFIFLGFSSFGKHQI) are Extracellular-facing. Residue Asn5 is glycosylated (N-linked (GlcNAc...) asparagine). The helical transmembrane segment at 26-46 (TLFVVFLTVYILTLVANIIIV) threads the bilayer. Over 47 to 54 (TIICIDHH) the chain is Cytoplasmic. A helical transmembrane segment spans residues 55–75 (LHTPMYFFLSMLASSETVYTL). Topologically, residues 76–99 (VIVPRMLLSLIFHNQPISLAGCAT) are extracellular. Cys97 and Cys188 form a disulfide bridge. The chain crosses the membrane as a helical span at residues 100–120 (QMFFFVILATNNCFLLTAMGY). Residues 121-139 (DRYVAICRPLRYTVIMSKG) are Cytoplasmic-facing. Residues 140–160 (LCAQLVCGSFGIGLTMAVLHV) traverse the membrane as a helical segment. The Extracellular portion of the chain corresponds to 161–196 (TAMFNLPFCGTVVDHFFCDIYPVMKLSCIDTTINEI). A helical transmembrane segment spans residues 197–216 (INYGVSSFVIFVPIGLIFIS). Residues 217-236 (YVLVISSILQIASAEGRKKT) are Cytoplasmic-facing. The chain crosses the membrane as a helical span at residues 237-257 (FATCVSHLTVVIVHCGCASIA). The Extracellular portion of the chain corresponds to 258 to 270 (YLKPKSESSIEKD). Residues 271 to 291 (LVLSVTYTIITPLLNPVVYSL) traverse the membrane as a helical segment. Topologically, residues 292-309 (RNKEVKDALCRVVGRNIS) are cytoplasmic.

It belongs to the G-protein coupled receptor 1 family. Expressed in both the aorta, the coronary artery and umbilical vein endothelial cells (HUVECs) (at protein level).

It is found in the cell membrane. Its function is as follows. Olfactory receptor. Activated by the synthetic floral odorant, lyral, and by alpha-cedrene, a sesquiterpene constituent of cedarwood oil. Its activation increases intracellular Ca(2+). Acts as a key regulator of myogenesis through its actions on cell migration and adhesion by activating the Ca(2+)-dependent AKT signal transduction pathway. Also acts as a regulator of angiogenesis. Moreover, plays a role in the regulation of lipid accumulation in hepatocytes via the cAMP-PKA pathway. May be involved in sperm chemotaxis and motility. This is Olfactory receptor 10J5 from Homo sapiens (Human).